Here is a 448-residue protein sequence, read N- to C-terminus: tRNA(Ile)-lysidine synthase (448 aa).

Ser25–Ser30 lines the ATP pocket.

It belongs to the tRNA(Ile)-lysidine synthase family.

It is found in the cytoplasm. It catalyses the reaction cytidine(34) in tRNA(Ile2) + L-lysine + ATP = lysidine(34) in tRNA(Ile2) + AMP + diphosphate + H(+). Ligates lysine onto the cytidine present at position 34 of the AUA codon-specific tRNA(Ile) that contains the anticodon CAU, in an ATP-dependent manner. Cytidine is converted to lysidine, thus changing the amino acid specificity of the tRNA from methionine to isoleucine. The polypeptide is tRNA(Ile)-lysidine synthase (Brucella canis (strain ATCC 23365 / NCTC 10854 / RM-666)).